The sequence spans 425 residues: 5-methylthioadenosine/S-adenosylhomocysteine deaminase (425 aa).

Zn(2+)-binding residues include histidine 63 and histidine 65. Substrate-binding residues include glutamate 92 and histidine 184. Zn(2+) is bound at residue histidine 211. The substrate site is built by glutamate 214 and aspartate 299. Aspartate 299 is a binding site for Zn(2+).

Belongs to the metallo-dependent hydrolases superfamily. MTA/SAH deaminase family. Zn(2+) is required as a cofactor.

The catalysed reaction is S-adenosyl-L-homocysteine + H2O + H(+) = S-inosyl-L-homocysteine + NH4(+). It carries out the reaction S-methyl-5'-thioadenosine + H2O + H(+) = S-methyl-5'-thioinosine + NH4(+). Functionally, catalyzes the deamination of 5-methylthioadenosine and S-adenosyl-L-homocysteine into 5-methylthioinosine and S-inosyl-L-homocysteine, respectively. Is also able to deaminate adenosine. This is 5-methylthioadenosine/S-adenosylhomocysteine deaminase from Pyrococcus abyssi (strain GE5 / Orsay).